The primary structure comprises 428 residues: Enolase 1 (428 aa).

Gln167 lines the (2R)-2-phosphoglycerate pocket. Residue Glu209 is the Proton donor of the active site. Asp246, Glu288, and Asp315 together coordinate Mg(2+). Lys340, Arg369, Ser370, and Lys391 together coordinate (2R)-2-phosphoglycerate. Residue Lys340 is the Proton acceptor of the active site.

The protein belongs to the enolase family. As to quaternary structure, component of the RNA degradosome, a multiprotein complex involved in RNA processing and mRNA degradation. Mg(2+) serves as cofactor.

Its subcellular location is the cytoplasm. The protein localises to the secreted. The protein resides in the cell surface. The enzyme catalyses (2R)-2-phosphoglycerate = phosphoenolpyruvate + H2O. It functions in the pathway carbohydrate degradation; glycolysis; pyruvate from D-glyceraldehyde 3-phosphate: step 4/5. Catalyzes the reversible conversion of 2-phosphoglycerate (2-PG) into phosphoenolpyruvate (PEP). It is essential for the degradation of carbohydrates via glycolysis. The chain is Enolase 1 from Pseudomonas syringae pv. tomato (strain ATCC BAA-871 / DC3000).